The primary structure comprises 443 residues: Ribosomal protein uS12 methylthiotransferase RimO (443 aa).

Positions 10-120 (PRVGFVSLGC…VVKAVHQHLP (111 aa)) constitute an MTTase N-terminal domain. Residues Cys-19, Cys-55, Cys-84, Cys-151, Cys-155, and Cys-158 each coordinate [4Fe-4S] cluster. Positions 137-375 (LTPAHYAYLK…DFQEDISTQR (239 aa)) constitute a Radical SAM core domain. Positions 377–443 (ERWIGRDITV…VHDLYARPLP (67 aa)) constitute a TRAM domain.

The protein belongs to the methylthiotransferase family. RimO subfamily. It depends on [4Fe-4S] cluster as a cofactor.

It localises to the cytoplasm. It catalyses the reaction L-aspartate(89)-[ribosomal protein uS12]-hydrogen + (sulfur carrier)-SH + AH2 + 2 S-adenosyl-L-methionine = 3-methylsulfanyl-L-aspartate(89)-[ribosomal protein uS12]-hydrogen + (sulfur carrier)-H + 5'-deoxyadenosine + L-methionine + A + S-adenosyl-L-homocysteine + 2 H(+). In terms of biological role, catalyzes the methylthiolation of an aspartic acid residue of ribosomal protein uS12. The polypeptide is Ribosomal protein uS12 methylthiotransferase RimO (Aromatoleum aromaticum (strain DSM 19018 / LMG 30748 / EbN1) (Azoarcus sp. (strain EbN1))).